Reading from the N-terminus, the 340-residue chain is Coproporphyrin III ferrochelatase (340 aa).

Residues S52 and Y116 each coordinate Fe-coproporphyrin III. 2 residues coordinate Fe(2+): H172 and E255.

This sequence belongs to the ferrochelatase family.

It localises to the cytoplasm. It carries out the reaction Fe-coproporphyrin III + 2 H(+) = coproporphyrin III + Fe(2+). The protein operates within porphyrin-containing compound metabolism; protoheme biosynthesis. Its function is as follows. Involved in coproporphyrin-dependent heme b biosynthesis. Catalyzes the insertion of ferrous iron into coproporphyrin III to form Fe-coproporphyrin III. The protein is Coproporphyrin III ferrochelatase of Mycobacterium marinum (strain ATCC BAA-535 / M).